We begin with the raw amino-acid sequence, 252 residues long: MTQTPEALTTEQFKQAIIDKGQYYHIYHPFHVMMYEGKATQQQIQAWVANRYYYQINIPLKDAAIMANCPDQRVRQEWIQRMIDQDGEYPDGGGREAWLRLAEAVGLSREQVISEELVLPGVRFAVDAYVNFRRRASWREAASSSLTELFAPQIHQSRLDSWPQHYPWIDDKGYEYFRSRLSQARRDVEHGLTITLDSFTTFEQQERMLEILQFKLDILWSILDALTLAYVHNEAPYHSVTSKRVWHKGLFK.

Belongs to the PqqC family.

It catalyses the reaction 6-(2-amino-2-carboxyethyl)-7,8-dioxo-1,2,3,4,7,8-hexahydroquinoline-2,4-dicarboxylate + 3 O2 = pyrroloquinoline quinone + 2 H2O2 + 2 H2O + H(+). The protein operates within cofactor biosynthesis; pyrroloquinoline quinone biosynthesis. Functionally, ring cyclization and eight-electron oxidation of 3a-(2-amino-2-carboxyethyl)-4,5-dioxo-4,5,6,7,8,9-hexahydroquinoline-7,9-dicarboxylic-acid to PQQ. The sequence is that of Pyrroloquinoline-quinone synthase (pqqC) from Acinetobacter calcoaceticus.